The following is a 38-amino-acid chain: Large ribosomal subunit protein bL36 (38 aa).

Belongs to the bacterial ribosomal protein bL36 family.

This is Large ribosomal subunit protein bL36 from Myxococcus xanthus (strain DK1622).